The sequence spans 325 residues: Cyclic AMP-responsive element-binding protein 1 (325 aa).

Composition is skewed to polar residues over residues 1-11 (MESGAENQQSG) and 18-27 (AESQQMTVQA). Disordered stretches follow at residues 1 to 27 (MESG…TVQA) and 92 to 111 (SEDS…RREI). The KID domain maps to 85-144 (QISTIAESEDSQESVDSVTDSQKRREILSRRPSYRKILNDLSSDAPGVPRIEEEKSEEET). Residue Ser117 is modified to Phosphoserine; by CaMK1, CaMK2, CaMK4, PKB/AKT1 or PKB/AKT2, RPS6KA3, RPS6KA4, RPS6KA5 and SGK1. Lys120 is covalently cross-linked (Glycyl lysine isopeptide (Lys-Gly) (interchain with G-Cter in SUMO2)). A disordered region spans residues 124–146 (DLSSDAPGVPRIEEEKSEEETSA). A Phosphoserine; by CaMK2 modification is found at Ser126. Ser255 is modified (phosphoserine; by HIPK2). Residues 267–325 (ARKREVRLMKNREAARECRRKKKEYVKCLENRVAVLENQNKTLIEELKALKDLYCHKSD) form the bZIP domain. A basic motif region spans residues 268–293 (RKREVRLMKNREAARECRRKKKEYVK). Residues Lys269 and Lys288 each participate in a glycyl lysine isopeptide (Lys-Gly) (interchain with G-Cter in SUMO1) cross-link. The segment at 295–316 (LENRVAVLENQNKTLIEELKAL) is leucine-zipper.

The protein belongs to the bZIP family. As to quaternary structure, interacts with PPRC1. Binds DNA as a dimer. This dimer is stabilized by magnesium ions. Interacts, through the bZIP domain, with the coactivators CRTC1/TORC1, CRTC2/TORC2 and CRTC3/TORC3. When phosphorylated on Ser-117, binds CREBBP. Interacts with CREBL2; regulates CREB1 phosphorylation, stability and transcriptional activity. Interacts (phosphorylated form) with TOX3. Interacts with ARRB1. Binds to HIPK2. Interacts with SGK1. Interacts with TSSK4; this interaction facilitates phosphorylation on Ser-117. Forms a complex with KMT2A and CREBBP. Interacts with TOX4; CREB1 is required for full induction of TOX4-dependent activity and the interaction is increased by cAMP and inhibited by insulin. Sumoylated with SUMO1. Sumoylation on Lys-288, but not on Lys-269, is required for nuclear localization of this protein. Sumoylation is enhanced under hypoxia, promoting nuclear localization and stabilization. Post-translationally, stimulated by phosphorylation. Phosphorylation of both Ser-117 and Ser-126 in the SCN regulates the activity of CREB and participates in circadian rhythm generation. Phosphorylation of Ser-117 allows CREBBP binding. Phosphorylated upon calcium influx by CaMK4 and CaMK2 on Ser-117. CaMK4 is much more potent than CaMK2 in activating CREB. Phosphorylated by CaMK2 on Ser-126. Phosphorylation of Ser-126 blocks CREB-mediated transcription even when Ser-117 is phosphorylated. Phosphorylated by CaMK1. Phosphorylation of Ser-255 by HIPK2 in response to genotoxic stress promotes CREB1 activity, facilitating the recruitment of the coactivator CBP. Phosphorylated at Ser-117 by RPS6KA3, RPS6KA4 and RPS6KA5 in response to mitogenic or stress stimuli. CREBL2 positively regulates phosphorylation at Ser-117 thereby stimulating CREB1 transcriptional activity. In liver, phosphorylation is induced by fasting or glucagon in a circadian fashion. Phosphorylated by TSSK4 on Ser-117.

It localises to the nucleus. In terms of biological role, phosphorylation-dependent transcription factor that stimulates transcription upon binding to the DNA cAMP response element (CRE), a sequence present in many viral and cellular promoters. Transcription activation is enhanced by the TORC coactivators which act independently of Ser-117 phosphorylation. Involved in different cellular processes including the synchronization of circadian rhythmicity and the differentiation of adipose cells. Regulates the expression of apoptotic and inflammatory response factors in cardiomyocytes in response to ERFE-mediated activation of AKT signaling. The chain is Cyclic AMP-responsive element-binding protein 1 (CREB1) from Bos taurus (Bovine).